Consider the following 187-residue polypeptide: Orotate phosphoribosyltransferase (187 aa).

Residues arginine 103, lysine 104, lysine 107, and 129-137 contribute to the 5-phospho-alpha-D-ribose 1-diphosphate site; that span reads EDVTTSGGS. Positions 133 and 161 each coordinate orotate.

It belongs to the purine/pyrimidine phosphoribosyltransferase family. PyrE subfamily. Homodimer. It depends on Mg(2+) as a cofactor.

It carries out the reaction orotidine 5'-phosphate + diphosphate = orotate + 5-phospho-alpha-D-ribose 1-diphosphate. The protein operates within pyrimidine metabolism; UMP biosynthesis via de novo pathway; UMP from orotate: step 1/2. Catalyzes the transfer of a ribosyl phosphate group from 5-phosphoribose 1-diphosphate to orotate, leading to the formation of orotidine monophosphate (OMP). In Methanosarcina acetivorans (strain ATCC 35395 / DSM 2834 / JCM 12185 / C2A), this protein is Orotate phosphoribosyltransferase.